A 474-amino-acid chain; its full sequence is Glutamate--tRNA ligase (474 aa).

Residues 11 to 21 carry the 'HIGH' region motif; the sequence is PSPTGFLHIGG. Positions 240-244 match the 'KMSKS' region motif; sequence KLSKR. ATP is bound at residue K243.

The protein belongs to the class-I aminoacyl-tRNA synthetase family. Glutamate--tRNA ligase type 1 subfamily. As to quaternary structure, monomer.

The protein localises to the cytoplasm. The catalysed reaction is tRNA(Glu) + L-glutamate + ATP = L-glutamyl-tRNA(Glu) + AMP + diphosphate. Its function is as follows. Catalyzes the attachment of glutamate to tRNA(Glu) in a two-step reaction: glutamate is first activated by ATP to form Glu-AMP and then transferred to the acceptor end of tRNA(Glu). The chain is Glutamate--tRNA ligase from Nitrobacter hamburgensis (strain DSM 10229 / NCIMB 13809 / X14).